A 242-amino-acid polypeptide reads, in one-letter code: Putative ABC transporter ATP-binding protein TTE0246 (242 aa).

The ABC transporter domain maps to 5–242 (FELKNVSYFY…EKLLLKANLI (238 aa)). 38 to 45 (GANGSGKS) provides a ligand contact to ATP.

Belongs to the ABC transporter superfamily.

It localises to the cell membrane. Functionally, probably part of an ABC transporter complex. Responsible for energy coupling to the transport system. The protein is Putative ABC transporter ATP-binding protein TTE0246 of Caldanaerobacter subterraneus subsp. tengcongensis (strain DSM 15242 / JCM 11007 / NBRC 100824 / MB4) (Thermoanaerobacter tengcongensis).